Consider the following 127-residue polypeptide: Large ribosomal subunit protein bL20 (127 aa).

Belongs to the bacterial ribosomal protein bL20 family.

In terms of biological role, binds directly to 23S ribosomal RNA and is necessary for the in vitro assembly process of the 50S ribosomal subunit. It is not involved in the protein synthesizing functions of that subunit. The protein is Large ribosomal subunit protein bL20 of Bifidobacterium adolescentis (strain ATCC 15703 / DSM 20083 / NCTC 11814 / E194a).